The sequence spans 274 residues: Mitochondrial S-adenosylmethionine carrier protein (274 aa).

Solcar repeat units lie at residues 4–77, 86–168, and 177–265; these read PGFV…VKWF, LTPM…LKAL, and VDSW…THSL. 6 consecutive transmembrane segments (helical) span residues 5 to 25, 49 to 69, 85 to 105, 142 to 162, 182 to 202, and 238 to 258; these read GFVA…LILF, IYAG…AFFI, YLTP…ACLI, RGYK…FPLW, SAVC…PLDV, and FAGV…FLGA.

Belongs to the mitochondrial carrier (TC 2.A.29) family. In terms of tissue distribution, widely expressed. Highly expressed in testis, with moderate expression in brain, heart, kidney, lung, skeletal muscle, pancreas, small intestine and liver, and low expression in spleen.

It localises to the mitochondrion inner membrane. It carries out the reaction S-adenosyl-L-homocysteine(out) + S-adenosyl-L-methionine(in) = S-adenosyl-L-homocysteine(in) + S-adenosyl-L-methionine(out). With respect to regulation, strongly inhibited by tannic acid and Bromocresol Purple. Mitochondrial S-adenosyl-L-methionine/S-adenosyl-L-homocysteine antiporter. Mediates the exchange of cytosolic S-adenosyl-L-methionine, the predominant methyl-group donor for macromolecule methylation processes, for mitochondrial S-adenosylhomocysteine(SAH), a by-product of methylation reactions. The protein is Mitochondrial S-adenosylmethionine carrier protein of Homo sapiens (Human).